Reading from the N-terminus, the 1413-residue chain is ABC-type transporter vrcC (1413 aa).

One can recognise an ABC transporter 1 domain in the interval 108–365 (VWFEALALAR…FLDMGFACPE (258 aa)). N289 carries N-linked (GlcNAc...) asparagine glycosylation. Residues 476 to 496 (VTISSLIGNVITALVIASIFY) traverse the membrane as a helical segment. A glycan (N-linked (GlcNAc...) asparagine) is linked at N501. 2 helical membrane-spanning segments follow: residues 510 to 530 (ALLFFACLINALGCGLEMLTL) and 564 to 584 (VLNAILSLVQALPFCAVVLLG). N675 carries an N-linked (GlcNAc...) asparagine glycan. Residues 683–703 (IGIILAFMVVLGAIYLVATDF) traverse the membrane as a helical segment. Residues 725–748 (SGKPDDFEGGSDRNASQEKSKSDR) form a disordered region. N738 is a glycosylation site (N-linked (GlcNAc...) asparagine). Residues 739 to 748 (ASQEKSKSDR) show a composition bias toward basic and acidic residues. The 243-residue stretch at 761 to 1003 (FQWQDVCFDI…ILIDYFVRNG (243 aa)) folds into the ABC transporter 2 domain. The next 6 membrane-spanning stretches (helical) occupy residues 1105-1125 (IYIYSKAILCVLPALFVGFSL), 1142-1162 (IFLLLIQFGQLIQQIMPHFVT), 1191-1211 (LFWNSLMSILMFLCWYYPIGM), 1230-1250 (LLIWTFLLFSSTFAHFMIAAL), 1266-1286 (LCLLFCGVLATPAQLPGFWIF), and 1290-1310 (VSPFTYLVSGMLAVGIADTTV). An N-linked (GlcNAc...) asparagine glycan is attached at N1324. The helical transmembrane segment at 1378–1398 (FGLMWVFIFTNIVAACLLYWW) threads the bilayer.

Belongs to the ABC transporter superfamily. ABCG family. PDR (TC 3.A.1.205) subfamily.

The protein localises to the cell membrane. ABC-type transporter; part of the gene cluster that mediates the biosynthesis of the sesterterpene variecolin. VrcC is probably involved in the secretion of variecolin. This chain is ABC-type transporter vrcC, found in Aspergillus aculeatus (strain ATCC 16872 / CBS 172.66 / WB 5094).